Reading from the N-terminus, the 500-residue chain is Cytochrome P450 6B4 (500 aa).

Cys443 lines the heme pocket.

Belongs to the cytochrome P450 family. Requires heme as cofactor.

It is found in the endoplasmic reticulum membrane. The protein localises to the microsome membrane. It carries out the reaction an organic molecule + reduced [NADPH--hemoprotein reductase] + O2 = an alcohol + oxidized [NADPH--hemoprotein reductase] + H2O + H(+). Its function is as follows. Enables the insect to feed on furanocoumarin-producing plants and evolved as an adaptation for detoxification of xanthotoxin and other furanocoumarins. This isozyme metabolizes isopimpinellin, imperatorin, and bergapten at high rates, xanthotoxin and psoralen at intermediate rates and angelicin, sphondin, and trioxsalen only at very low rates. The chain is Cytochrome P450 6B4 (CYP6B4) from Papilio glaucus (Eastern tiger swallowtail butterfly).